Reading from the N-terminus, the 470-residue chain is Flavin-containing monooxygenase FMO GS-OX-like 6 (470 aa).

17-22 (GAGAAG) is a binding site for FAD. 214 to 219 (GYQSSG) contributes to the NADP(+) binding site.

This sequence belongs to the FMO family. FAD serves as cofactor.

Catalyzes the conversion of methylthioalkyl glucosinolates of any chain length into methylsulfinylalkyl glucosinolates. This Arabidopsis thaliana (Mouse-ear cress) protein is Flavin-containing monooxygenase FMO GS-OX-like 6.